Consider the following 640-residue polypeptide: Protein SPT10 (640 aa).

Residues 1–30 (MLNQHTSSVPDDEHLQMAHQNSSSEVRNEA) form a disordered region. The N-acetyltransferase domain occupies 121 to 259 (LDYSMDTEAD…AGILKGFDVP (139 aa)). Positions 534-565 (PHLTNNESQDHANPVNRDERDMNHSVPDLDRN) are disordered. Basic and acidic residues predominate over residues 549 to 565 (NRDERDMNHSVPDLDRN).

In terms of biological role, required for normal transcription at a number of loci in yeast. Affects transcription at Ty1 elements, at PHO5, STE6 and ADH2. The protein is Protein SPT10 (SPT10) of Saccharomyces cerevisiae (strain ATCC 204508 / S288c) (Baker's yeast).